The primary structure comprises 124 residues: CBS domain-containing protein MJ0729 (124 aa).

CBS domains are found at residues 10–67 and 70–124; these read MNKD…IEDL and LIDE…YKNR.

In terms of assembly, exhibits a pH-dependent oligomerization state: at pH 7, the dominant species is a dimer, where each monomer is a two-CBS domain protein, and at pH 4.5-4.8, the dominant species is a tetramer, with an oblong shape. At pH 2.5, there is formation of intermolecular hydrogen bonds, suggesting the presence of high-molecular weight species. The physiological dimeric species is thermal and chemically very stable.

In Methanocaldococcus jannaschii (strain ATCC 43067 / DSM 2661 / JAL-1 / JCM 10045 / NBRC 100440) (Methanococcus jannaschii), this protein is CBS domain-containing protein MJ0729.